Consider the following 240-residue polypeptide: Regulatory protein HlyX (240 aa).

Residues 15-28 (CTIHCQNCSISQLC) form an essential for the oxygen-regulated activity region. Positions 163–236 (MSAEEKLAAF…GKYITINRMD (74 aa)) constitute an HTH crp-type domain. Positions 196–215 (RGDIGNYLGLTIETISRLLG) form a DNA-binding region, H-T-H motif.

Its subcellular location is the cytoplasm. In terms of biological role, confers a hemolytic phenotype on E.coli. May regulate, rather than mediate, hemolytic activity. The sequence is that of Regulatory protein HlyX (hlyX) from Actinobacillus pleuropneumoniae (Haemophilus pleuropneumoniae).